The following is a 321-amino-acid chain: Hydropyrene synthase (321 aa).

Mg(2+)-binding residues include Asp-82, Asn-225, Ser-229, and Glu-233. The short motif at 82–87 is the DDxx(x)D/E motif element; sequence DDRAID. The NDxxSxxxD/E motif motif lies at 225–233; sequence NDLHSFARE.

It belongs to the terpene synthase family. Mg(2+) is required as a cofactor.

It catalyses the reaction (2E,6E,10E)-geranylgeranyl diphosphate = hydropyrene + diphosphate. The enzyme catalyses (2E,6E,10E)-geranylgeranyl diphosphate + H2O = hydropyrenol + diphosphate. The catalysed reaction is (2E,6E,10E)-geranylgeranyl diphosphate = isoelisabethatriene + diphosphate. It functions in the pathway secondary metabolite biosynthesis; terpenoid biosynthesis. Terpene synthase that catalyzes the conversion of geranylgeranyl diphosphate (GGPP) into a mixture of diterpenes, including hydropyrene (HP), hydropyrenol (HPol), isoelisabethatriene and traces of isoelisabethatriene B. Hydropyrene is the main product. Some other diterpenoids are also produced in very low quantities. The chain is Hydropyrene synthase from Streptomyces clavuligerus.